Reading from the N-terminus, the 399-residue chain is Flavohemoprotein (399 aa).

Residues M1–K138 enclose the Globin domain. T22 carries the phosphothreonine modification. H85 contacts heme b. Active-site charge relay system residues include Y95 and E137. Residues W146 to V399 form a reductase region. The 118-residue stretch at P147–N264 folds into the FAD-binding FR-type domain. FAD is bound by residues Y189 and R207–S210. Position 281–286 (G281–P286) interacts with NADP(+). P389–P392 lines the FAD pocket.

The protein belongs to the globin family. Two-domain flavohemoproteins subfamily. In the C-terminal section; belongs to the flavoprotein pyridine nucleotide cytochrome reductase family. Requires FAD as cofactor. The cofactor is heme b.

The protein localises to the cytoplasm. The enzyme catalyses 2 nitric oxide + NADPH + 2 O2 = 2 nitrate + NADP(+) + H(+). It carries out the reaction 2 nitric oxide + NADH + 2 O2 = 2 nitrate + NAD(+) + H(+). Functionally, is involved in NO detoxification in an aerobic process, termed nitric oxide dioxygenase (NOD) reaction that utilizes O(2) and NAD(P)H to convert NO to nitrate, which protects the fungus from various noxious nitrogen compounds. Therefore, plays a central role in the inducible response to nitrosative stress. In the presence of oxygen and NADH, it has NADH oxidase activity, which leads to the generation of superoxide and H(2)O(2). Under anaerobic conditions, it also exhibits nitric oxide reductase and FAD reductase activities. However, all these reactions are much lower than NOD activity. The polypeptide is Flavohemoprotein (YHB1) (Saccharomyces cerevisiae (strain ATCC 204508 / S288c) (Baker's yeast)).